A 325-amino-acid polypeptide reads, in one-letter code: ATP phosphoribosyltransferase (325 aa).

This sequence belongs to the ATP phosphoribosyltransferase family. Long subfamily. The cofactor is Mg(2+).

It localises to the cytoplasm. The catalysed reaction is 1-(5-phospho-beta-D-ribosyl)-ATP + diphosphate = 5-phospho-alpha-D-ribose 1-diphosphate + ATP. The protein operates within amino-acid biosynthesis; L-histidine biosynthesis; L-histidine from 5-phospho-alpha-D-ribose 1-diphosphate: step 1/9. Feedback inhibited by histidine. In terms of biological role, catalyzes the condensation of ATP and 5-phosphoribose 1-diphosphate to form N'-(5'-phosphoribosyl)-ATP (PR-ATP). Has a crucial role in the pathway because the rate of histidine biosynthesis seems to be controlled primarily by regulation of HisG enzymatic activity. This Rhodopseudomonas palustris (strain HaA2) protein is ATP phosphoribosyltransferase.